We begin with the raw amino-acid sequence, 225 residues long: Orotate phosphoribosyltransferase (225 aa).

K29 contributes to the 5-phospho-alpha-D-ribose 1-diphosphate binding site. 37-38 lines the orotate pocket; sequence FF. 5-phospho-alpha-D-ribose 1-diphosphate is bound by residues 75–76, R101, K102, K105, H107, and 126–134; these read YK and DDVISAGTS. Orotate is bound by residues S130 and R158.

Belongs to the purine/pyrimidine phosphoribosyltransferase family. PyrE subfamily. As to quaternary structure, homodimer. Mg(2+) serves as cofactor.

It catalyses the reaction orotidine 5'-phosphate + diphosphate = orotate + 5-phospho-alpha-D-ribose 1-diphosphate. It participates in pyrimidine metabolism; UMP biosynthesis via de novo pathway; UMP from orotate: step 1/2. In terms of biological role, catalyzes the transfer of a ribosyl phosphate group from 5-phosphoribose 1-diphosphate to orotate, leading to the formation of orotidine monophosphate (OMP). The protein is Orotate phosphoribosyltransferase of Ralstonia pickettii (strain 12J).